Reading from the N-terminus, the 168-residue chain is tRNA-splicing endonuclease (168 aa).

Residues tyrosine 107, histidine 114, and lysine 145 contribute to the active site.

Belongs to the tRNA-intron endonuclease family. Archaeal short subfamily. As to quaternary structure, homotetramer; although the tetramer contains four active sites, only two participate in the cleavage. Therefore, it should be considered as a dimer of dimers.

It carries out the reaction pretRNA = a 3'-half-tRNA molecule with a 5'-OH end + a 5'-half-tRNA molecule with a 2',3'-cyclic phosphate end + an intron with a 2',3'-cyclic phosphate and a 5'-hydroxyl terminus.. In terms of biological role, endonuclease that removes tRNA introns. Cleaves pre-tRNA at the 5'- and 3'-splice sites to release the intron. The products are an intron and two tRNA half-molecules bearing 2',3' cyclic phosphate and 5'-OH termini. Recognizes a pseudosymmetric substrate in which 2 bulged loops of 3 bases are separated by a stem of 4 bp. In Thermococcus kodakarensis (strain ATCC BAA-918 / JCM 12380 / KOD1) (Pyrococcus kodakaraensis (strain KOD1)), this protein is tRNA-splicing endonuclease.